The following is a 100-amino-acid chain: Urease subunit gamma (100 aa).

Belongs to the urease gamma subunit family. As to quaternary structure, heterotrimer of UreA (gamma), UreB (beta) and UreC (alpha) subunits. Three heterotrimers associate to form the active enzyme.

It is found in the cytoplasm. It catalyses the reaction urea + 2 H2O + H(+) = hydrogencarbonate + 2 NH4(+). It participates in nitrogen metabolism; urea degradation; CO(2) and NH(3) from urea (urease route): step 1/1. The protein is Urease subunit gamma of Mycolicibacterium gilvum (strain PYR-GCK) (Mycobacterium gilvum (strain PYR-GCK)).